The chain runs to 857 residues: DNA mismatch repair protein MutS (857 aa).

613–620 is a binding site for ATP; that stretch reads GPNMGGKS. A disordered region spans residues 797-820; it reads TSLPHEQPAAHKAKDAPQVPHQSD.

Belongs to the DNA mismatch repair MutS family.

Functionally, this protein is involved in the repair of mismatches in DNA. It is possible that it carries out the mismatch recognition step. This protein has a weak ATPase activity. The sequence is that of DNA mismatch repair protein MutS from Pseudomonas putida (strain ATCC 700007 / DSM 6899 / JCM 31910 / BCRC 17059 / LMG 24140 / F1).